The sequence spans 51 residues: Sperm protamine P1 (51 aa).

Intrachain disulfides connect cysteine 7–cysteine 15 and cysteine 40–cysteine 48.

Belongs to the protamine P1 family. Cross-linked by interchain disulfide bonds around the DNA-helix. Post-translationally, phosphorylated by SRPK1. As to expression, testis.

The protein resides in the nucleus. It localises to the chromosome. Protamines substitute for histones in the chromatin of sperm during the haploid phase of spermatogenesis. They compact sperm DNA into a highly condensed, stable and inactive complex. This chain is Sperm protamine P1 (PRM1), found in Bos taurus (Bovine).